A 155-amino-acid polypeptide reads, in one-letter code: Eosinophil cationic protein (155 aa).

The signal sequence occupies residues 1 to 25 (MGLKLLESRLCLLLSLGLVLMLASC). The Proton acceptor role is filled by His-38. 4 disulfide bridges follow: Cys-47–Cys-106, Cys-61–Cys-118, Cys-79–Cys-133, and Cys-86–Cys-94. 62–66 (KDINT) contacts substrate. N-linked (GlcNAc...) asparagine glycans are attached at residues Asn-88 and Asn-107. The active-site Proton donor is the His-150.

Belongs to the pancreatic ribonuclease family.

Its subcellular location is the cytoplasmic granule. Functionally, cytotoxin and helminthotoxin with ribonuclease activity. Possesses a wide variety of biological activities. The polypeptide is Eosinophil cationic protein (Rnase3) (Rattus norvegicus (Rat)).